A 501-amino-acid polypeptide reads, in one-letter code: Phosphoethanolamine N-methyltransferase 1 (501 aa).

S-adenosyl-L-homocysteine is bound by residues Gly72, Arg77, Asp93, Asp118, Val119, and Asn137. Phosphocholine is bound by residues Ser170, Thr175, Gly176, Arg180, and Tyr187. N-methylethanolamine phosphate contacts are provided by residues 256-257 (QY) and Tyr265. Tyr265 serves as a coordination point for phosphocholine. S-adenosyl-L-homocysteine-binding residues include Val274, Ser275, Gly301, Asp323, Asp349, Cys350, and Arg366. Phosphocholine is bound by residues Tyr397, Tyr411, Arg415, Tyr417, and Lys483. N-methylethanolamine phosphate is bound by residues Tyr397, Tyr411, 415 to 417 (RGY), and Lys483.

It belongs to the class I-like SAM-binding methyltransferase superfamily. PEAMT family.

It carries out the reaction phosphoethanolamine + S-adenosyl-L-methionine = N-methylethanolamine phosphate + S-adenosyl-L-homocysteine + H(+). It catalyses the reaction N-methylethanolamine phosphate + S-adenosyl-L-methionine = N,N-dimethylethanolamine phosphate + S-adenosyl-L-homocysteine + H(+). The catalysed reaction is N,N-dimethylethanolamine phosphate + S-adenosyl-L-methionine = phosphocholine + S-adenosyl-L-homocysteine + H(+). Its pathway is phospholipid metabolism; phosphatidylcholine biosynthesis; phosphocholine from phosphoethanolamine: step 1/1. Involved in phosphocholine biosynthesis. Catalyzes the N-methylation of phosphoethanolamine, phosphomonomethylethanolamine and phosphodimethylethanolamine, the three methylation steps required to convert phosphoethanolamine to phosphocholine (PC). May be involved in root development. The polypeptide is Phosphoethanolamine N-methyltransferase 1 (Zea mays (Maize)).